A 394-amino-acid polypeptide reads, in one-letter code: Chorismate synthase (394 aa).

Arginine 62 lines the NADP(+) pocket. FMN contacts are provided by residues 144 to 146, glycine 307, 322 to 326, and arginine 349; these read RAS and KPTPT.

It belongs to the chorismate synthase family. As to quaternary structure, homotetramer. It depends on FMNH2 as a cofactor.

The catalysed reaction is 5-O-(1-carboxyvinyl)-3-phosphoshikimate = chorismate + phosphate. It functions in the pathway metabolic intermediate biosynthesis; chorismate biosynthesis; chorismate from D-erythrose 4-phosphate and phosphoenolpyruvate: step 7/7. Catalyzes the anti-1,4-elimination of the C-3 phosphate and the C-6 proR hydrogen from 5-enolpyruvylshikimate-3-phosphate (EPSP) to yield chorismate, which is the branch point compound that serves as the starting substrate for the three terminal pathways of aromatic amino acid biosynthesis. This reaction introduces a second double bond into the aromatic ring system. In Acetivibrio thermocellus (strain ATCC 27405 / DSM 1237 / JCM 9322 / NBRC 103400 / NCIMB 10682 / NRRL B-4536 / VPI 7372) (Clostridium thermocellum), this protein is Chorismate synthase.